A 360-amino-acid chain; its full sequence is Membrane-bound lytic murein transglycosylase C (360 aa).

Residues methionine 1–serine 16 form the signal peptide. The N-palmitoyl cysteine moiety is linked to residue cysteine 17. Cysteine 17 carries S-diacylglycerol cysteine lipidation.

This sequence belongs to the transglycosylase Slt family.

It is found in the cell outer membrane. The enzyme catalyses Exolytic cleavage of the (1-&gt;4)-beta-glycosidic linkage between N-acetylmuramic acid (MurNAc) and N-acetylglucosamine (GlcNAc) residues in peptidoglycan, from either the reducing or the non-reducing ends of the peptidoglycan chains, with concomitant formation of a 1,6-anhydrobond in the MurNAc residue.. Its function is as follows. Murein-degrading enzyme. May play a role in recycling of muropeptides during cell elongation and/or cell division. The protein is Membrane-bound lytic murein transglycosylase C of Salmonella typhi.